Reading from the N-terminus, the 30-residue chain is Trypsin inhibitor 1 (30 aa).

3 cysteine pairs are disulfide-bonded: cysteine 4–cysteine 21, cysteine 11–cysteine 23, and cysteine 17–cysteine 29.

It belongs to the protease inhibitor I7 (squash-type serine protease inhibitor) family.

It is found in the secreted. Functionally, inhibits trypsin. The sequence is that of Trypsin inhibitor 1 from Citrullus lanatus (Watermelon).